The sequence spans 328 residues: Carbonic anhydrase-related protein 11 (328 aa).

The N-terminal stretch at 1–23 (MGGAARLSAPQALVLWAALGAAA) is a signal peptide. Residues 33-303 (DWWSYKENLQ…LAHRALRGNR (271 aa)) enclose the Alpha-carbonic anhydrase domain. An N-linked (GlcNAc...) asparagine glycan is attached at asparagine 118. Residues 300-328 (RGNRDPRHPERRCRGPNYRLHVDGGPHGR) are disordered. Over residues 319–328 (LHVDGGPHGR) the composition is skewed to basic and acidic residues.

Belongs to the alpha-carbonic anhydrase family.

It is found in the secreted. Does not have a catalytic activity. The polypeptide is Carbonic anhydrase-related protein 11 (Ca11) (Mus musculus (Mouse)).